A 360-amino-acid polypeptide reads, in one-letter code: Aurora kinase B (360 aa).

Residues 93 to 343 form the Protein kinase domain; it reads FDIGRPLGKG…LKGVMEHPWV (251 aa). Residues 99-107 and Lys-122 each bind ATP; that span reads LGKGKFGNV. Asp-216 (proton acceptor) is an active-site residue.

This sequence belongs to the protein kinase superfamily. Ser/Thr protein kinase family. Aurora subfamily. Component of the chromosomal passenger complex (CPC).

It localises to the nucleus. Its subcellular location is the chromosome. The protein resides in the centromere. The protein localises to the cytoplasm. It is found in the cytoskeleton. It localises to the spindle. Its subcellular location is the midbody. It catalyses the reaction L-seryl-[protein] + ATP = O-phospho-L-seryl-[protein] + ADP + H(+). The enzyme catalyses L-threonyl-[protein] + ATP = O-phospho-L-threonyl-[protein] + ADP + H(+). Its activity is regulated as follows. Kinase activity is stimulated by cell-cycle specific phosphorylation. Serine/threonine-protein kinase component of the chromosomal passenger complex (CPC), a complex that acts as a key regulator of mitosis. The CPC complex has essential functions at the centromere in ensuring correct chromosome alignment and segregation and is required for chromatin-induced microtubule stabilization and spindle assembly. Involved in the bipolar attachment of spindle microtubules to kinetochores and is a key regulator for the onset of cytokinesis during mitosis. Required for central/midzone spindle assembly and cleavage furrow formation. Key component of the cytokinesis checkpoint, a process required to delay abscission to prevent both premature resolution of intercellular chromosome bridges and accumulation of DNA damage. Phosphorylates 'Ser-10' of histone H3 during mitosis. This chain is Aurora kinase B, found in Xenopus tropicalis (Western clawed frog).